Here is a 128-residue protein sequence, read N- to C-terminus: uncharacterized protein (128 aa).

A helical membrane pass occupies residues 8–28; sequence YQAIYLIFAGFTVFGLLLHFY.

It localises to the membrane. This is an uncharacterized protein from Haemophilus influenzae (strain ATCC 51907 / DSM 11121 / KW20 / Rd).